Here is a 63-residue protein sequence, read N- to C-terminus: Lantipeptide Flvbeta.a (63 aa).

Positions 1–28 are cleaved as a propeptide — cleaved by FlvT; that stretch reads MSEKNMEKAGVVKADELDEMIDETTGGA. Threonine 30, threonine 33, threonine 38, and threonine 39 each carry 2,3-didehydrobutyrine; by FlvM2. The lanthionine (Ser-Cys); by FlvM2 cross-link spans 43–49; that stretch reads SKGLQNC. 2,3-didehydrobutyrine; by FlvM2 occurs at positions 54 and 55.

In terms of processing, maturation of FlvA2 peptides involves the enzymatic conversion of Thr, and Ser into dehydrated AA and the formation of thioether bonds with cysteines. Modifications are processed by the flavecin synthetase FlvM2. This is followed by membrane translocation and cleavage of the modified precursor. Contains DL-lanthionine, when coepressed in E.coli with the flavecin synthetase FlvM2.

The protein resides in the secreted. In terms of biological role, lanthionine-containing peptide that does probably not show antibacterial activity, since its analog [+3]Flvbeta.a does not show antibacterial activity against M.luteus. Also does not show antibiotic activity when tested with [Del2]Flvalpha.a, an analog of Flvalpha.a, which is encoded by the same operon than Flvbeta.a. The bactericidal activity of lantibiotics is based on depolarization of energized bacterial cytoplasmic membranes, initiated by the formation of aqueous transmembrane pores. The chain is Lantipeptide Flvbeta.a from Ruminococcus flavefaciens.